A 202-amino-acid chain; its full sequence is Small ribosomal subunit protein uS4c (202 aa).

Residues 90-153 enclose the S4 RNA-binding domain; it reads MRLDNVIFRL…KSETIISKNI (64 aa).

The protein belongs to the universal ribosomal protein uS4 family. As to quaternary structure, part of the 30S ribosomal subunit. Contacts protein S5. The interaction surface between S4 and S5 is involved in control of translational fidelity.

The protein resides in the plastid. Its subcellular location is the chloroplast. Functionally, one of the primary rRNA binding proteins, it binds directly to 16S rRNA where it nucleates assembly of the body of the 30S subunit. With S5 and S12 plays an important role in translational accuracy. This chain is Small ribosomal subunit protein uS4c (rps4), found in Arbusculohypopterygium arbuscula (Moss).